The primary structure comprises 105 residues: UPF0145 protein AHA_2580 (105 aa).

Belongs to the UPF0145 family.

The chain is UPF0145 protein AHA_2580 from Aeromonas hydrophila subsp. hydrophila (strain ATCC 7966 / DSM 30187 / BCRC 13018 / CCUG 14551 / JCM 1027 / KCTC 2358 / NCIMB 9240 / NCTC 8049).